A 535-amino-acid polypeptide reads, in one-letter code: Methylmalonate-semialdehyde/malonate-semialdehyde dehydrogenase [acylating], mitochondrial (535 aa).

The transit peptide at 1-32 (MAAAVAAAAAVRSRILQVSSKVNSTWYPASSF) directs the protein to the mitochondrion. Lysine 47, lysine 52, lysine 55, and lysine 76 each carry N6-acetyllysine; alternate. N6-succinyllysine; alternate is present on residues lysine 47, lysine 52, lysine 55, and lysine 76. Position 87 is an N6-acetyllysine (lysine 87). N6-acetyllysine; alternate occurs at positions 117 and 129. An N6-succinyllysine; alternate mark is found at lysine 117 and lysine 129. Residues alanine 183, phenylalanine 185, lysine 209, glutamate 212, arginine 213, and serine 262 each coordinate NAD(+). Serine 262 is subject to Phosphoserine. Lysine 298 bears the N6-acetyllysine mark. The active-site Nucleophile is the cysteine 317. An N6-acetyllysine mark is found at lysine 330 and lysine 331. 2 positions are modified to N6-acetyllysine; alternate: lysine 364 and lysine 376. N6-succinyllysine; alternate is present on residues lysine 364 and lysine 376. Serine 380 is modified (phosphoserine). Lysine 391 carries the N6-succinyllysine modification. Position 417 (glutamate 417) interacts with NAD(+). Lysine 500 is subject to N6-acetyllysine. The residue at position 517 (lysine 517) is an N6-succinyllysine.

The protein belongs to the aldehyde dehydrogenase family. Homotetramer. As to expression, expressed in the head and flagellum of epididymal sperm but not in testicular sperm (at protein level). Kidney &gt; liver &gt; heart &gt; muscle &gt; brain.

It localises to the mitochondrion. It carries out the reaction 3-oxopropanoate + NAD(+) + CoA + H2O = hydrogencarbonate + acetyl-CoA + NADH + H(+). The catalysed reaction is 2-methyl-3-oxopropanoate + NAD(+) + CoA + H2O = propanoyl-CoA + hydrogencarbonate + NADH + H(+). It catalyses the reaction (R)-2-methyl-3-oxopropanoate + NAD(+) + CoA + H2O = propanoyl-CoA + hydrogencarbonate + NADH + H(+). The enzyme catalyses (S)-2-methyl-3-oxopropanoate + NAD(+) + CoA + H2O = propanoyl-CoA + hydrogencarbonate + NADH + H(+). Functionally, malonate and methylmalonate semialdehyde dehydrogenase involved in the catabolism of valine, thymine, and compounds catabolized by way of beta-alanine, including uracil and cytidine. The polypeptide is Methylmalonate-semialdehyde/malonate-semialdehyde dehydrogenase [acylating], mitochondrial (Rattus norvegicus (Rat)).